Reading from the N-terminus, the 86-residue chain is Small ribosomal subunit protein bS16 (86 aa).

This sequence belongs to the bacterial ribosomal protein bS16 family.

The protein is Small ribosomal subunit protein bS16 of Leptothrix cholodnii (strain ATCC 51168 / LMG 8142 / SP-6) (Leptothrix discophora (strain SP-6)).